Consider the following 122-residue polypeptide: Cytochrome c-556 (122 aa).

Residues Met11, Cys111, Cys114, and His115 each contribute to the heme site. Heme c contacts are provided by Met11, Cys111, Cys114, and His115.

Monomer. Post-translationally, binds 1 heme c group covalently per subunit.

In terms of biological role, low-spin monoheme cytochrome c. This chain is Cytochrome c-556, found in Agrobacterium tumefaciens (strain B2A).